A 51-amino-acid polypeptide reads, in one-letter code: Large ribosomal subunit protein eL39 (51 aa).

This sequence belongs to the eukaryotic ribosomal protein eL39 family.

This is Large ribosomal subunit protein eL39 from Saccharolobus islandicus (strain L.S.2.15 / Lassen #1) (Sulfolobus islandicus).